The primary structure comprises 293 residues: 5'-3' exoribonuclease Rnm (293 aa).

Mn(2+)-binding residues include histidine 13, histidine 15, aspartate 20, histidine 45, glutamate 72, histidine 83, histidine 198, aspartate 255, and histidine 257.

Belongs to the PHP family. TrpH/YciV subfamily. It depends on Mn(2+) as a cofactor.

It catalyses the reaction a ribonucleoside 3',5'-bisphosphate + H2O = a ribonucleoside 5'-phosphate + phosphate. In terms of biological role, exoribonuclease that catalyzes the last steps of 5S, 16S and 23S rRNA 5'-end maturation. Removes 3 nucleotides (nt) from the 5' end of 5S, 16S and 23S rRNA precursors to generate the mature 5' ends. Precursors with longer extensions are not processed (7 nt at the 5' end of pre-23S rRNA or 66 nt at the 5'-end of 16S rRNA are not processed). 5S and 23S rRNA maturation occurs more efficiently and accurately on ribosomal particles as compared to free RNA; the enzyme overdigests free RNA but generates the correct 5'-end in ribosomes from rnm deletion strains. Efficiently catalyzes the hydrolysis of the 3'-phosphate from 3',5'-bis-phosphonucleotides as well as the successive hydrolysis of 5'-phosphomononucleotides from the 5'-end of short pieces of RNA and DNA, with no specificity toward the identity of the nucleotide base. Is more efficient at hydrolyzing RNA oligonucleotides than DNA oligonucleotides. This enzyme can also hydrolyze annealed DNA duplexes, albeit at a catalytic efficiency approximately 10-fold lower than that of the corresponding single-stranded oligonucleotides. The chain is 5'-3' exoribonuclease Rnm from Escherichia coli (strain K12).